We begin with the raw amino-acid sequence, 313 residues long: Putative S-adenosyl-L-methionine-dependent methyltransferase MUL_0706 (313 aa).

Residues Asp132 and 161 to 162 (DL) contribute to the S-adenosyl-L-methionine site.

It belongs to the UPF0677 family.

Exhibits S-adenosyl-L-methionine-dependent methyltransferase activity. In Mycobacterium ulcerans (strain Agy99), this protein is Putative S-adenosyl-L-methionine-dependent methyltransferase MUL_0706.